The following is a 500-amino-acid chain: Cytochrome P450 71B38 (500 aa).

The chain crosses the membrane as a helical span at residues 3–23 (IFLCFLLLLPLSLILFKKLLP). Heme is bound at residue Cys441.

Belongs to the cytochrome P450 family. Heme is required as a cofactor.

It localises to the membrane. The sequence is that of Cytochrome P450 71B38 (CYP71B38) from Arabidopsis thaliana (Mouse-ear cress).